Reading from the N-terminus, the 72-residue chain is Large ribosomal subunit protein bL31 (72 aa).

Positions 16, 18, 38, and 41 each coordinate Zn(2+).

Belongs to the bacterial ribosomal protein bL31 family. Type A subfamily. In terms of assembly, part of the 50S ribosomal subunit. Zn(2+) serves as cofactor.

Functionally, binds the 23S rRNA. This is Large ribosomal subunit protein bL31 from Vibrio cholerae serotype O1 (strain ATCC 39541 / Classical Ogawa 395 / O395).